The following is a 318-amino-acid chain: Pyrimidine-specific ribonucleoside hydrolase RihA (318 aa).

The active site involves His240.

Belongs to the IUNH family. RihA subfamily.

In terms of biological role, hydrolyzes cytidine or uridine to ribose and cytosine or uracil, respectively. In Shewanella sp. (strain MR-7), this protein is Pyrimidine-specific ribonucleoside hydrolase RihA.